Reading from the N-terminus, the 689-residue chain is Acyl-coenzyme A oxidase 1 (689 aa).

FAD contacts are provided by Thr149 and Gly188. Glu444 serves as the catalytic Proton acceptor.

The protein belongs to the acyl-CoA oxidase family. In terms of assembly, heteropentamer composed of five different subunits. FAD is required as a cofactor.

Its subcellular location is the peroxisome. It catalyses the reaction a 2,3-saturated acyl-CoA + O2 = a (2E)-enoyl-CoA + H2O2. It participates in lipid metabolism; peroxisomal fatty acid beta-oxidation. This Yarrowia lipolytica (strain CLIB 122 / E 150) (Yeast) protein is Acyl-coenzyme A oxidase 1 (POX1).